Reading from the N-terminus, the 469-residue chain is MSAPRTLYDKIWDDHLVNQQDDGTCLLYIDRHLVHEVTSPQAFEGLRMAGRKVRAPEKTLAVVDHNVPTSPDRHLGIKNEESRIQVEALARNAADFGVEYYSENDKRQGIVHIVGPEQGFTLPGMTIVCGDSHTSTHGAFGALAHGIGTSEVEHVLATQTLIQKKAKNMLVRVDGQLPPGVTAKDIILAIIGEIGTAGGTGHVIEFAGEAIRSLSMEGRMTICNMTIEGGARAGLIAPDETTFDYIKDKPRAPKGKAWDMALDYWKTLHTDEGAHYDRIVVLDAADLPPIVSWGSSPEDVISVQGAVPNPDDIQEETKRASKWRALDYMGLKPGTKITDIAVDRVFIGSCTNGRIEDLRAVAKVVEGRKVASTVSAMIVPGSGLVKEQAEAEGLDKIFKEAGFDWREPGCSMCLAMNDDRLKPGERCASTSNRNFEGRQGFKGRTHLVSPAMAAAAAVAGHFVDIREWK.

The [4Fe-4S] cluster site is built by C350, C410, and C413.

It belongs to the aconitase/IPM isomerase family. LeuC type 1 subfamily. Heterodimer of LeuC and LeuD. Requires [4Fe-4S] cluster as cofactor.

The enzyme catalyses (2R,3S)-3-isopropylmalate = (2S)-2-isopropylmalate. The protein operates within amino-acid biosynthesis; L-leucine biosynthesis; L-leucine from 3-methyl-2-oxobutanoate: step 2/4. Its function is as follows. Catalyzes the isomerization between 2-isopropylmalate and 3-isopropylmalate, via the formation of 2-isopropylmaleate. The sequence is that of 3-isopropylmalate dehydratase large subunit from Sinorhizobium fredii (strain NBRC 101917 / NGR234).